The chain runs to 203 residues: EF-hand calcium-binding domain-containing protein 8 (203 aa).

The interval 61 to 107 (SSEKPGESPKPQKMAQPGGSQKKETSRSVPVTDPTSHNSEINQRDQQ) is disordered. Polar residues predominate over residues 87-107 (RSVPVTDPTSHNSEINQRDQQ). EF-hand domains are found at residues 111-145 (MHLA…VLSS) and 146-181 (MSEE…EFQG).

This is EF-hand calcium-binding domain-containing protein 8 (Efcab8) from Mus musculus (Mouse).